Here is a 496-residue protein sequence, read N- to C-terminus: L-arabinose isomerase (496 aa).

Mn(2+) is bound by residues Glu-302, Glu-329, His-346, and His-445.

It belongs to the arabinose isomerase family. Mn(2+) is required as a cofactor.

It carries out the reaction beta-L-arabinopyranose = L-ribulose. The protein operates within carbohydrate degradation; L-arabinose degradation via L-ribulose; D-xylulose 5-phosphate from L-arabinose (bacterial route): step 1/3. Functionally, catalyzes the conversion of L-arabinose to L-ribulose. This Thermotoga neapolitana (strain ATCC 49049 / DSM 4359 / NBRC 107923 / NS-E) protein is L-arabinose isomerase.